The primary structure comprises 276 residues: Ribosomal RNA small subunit methyltransferase A (276 aa).

Residues asparagine 27, leucine 29, glycine 54, glutamate 75, aspartate 101, and asparagine 123 each contribute to the S-adenosyl-L-methionine site.

Belongs to the class I-like SAM-binding methyltransferase superfamily. rRNA adenine N(6)-methyltransferase family. RsmA subfamily.

The protein localises to the cytoplasm. The enzyme catalyses adenosine(1518)/adenosine(1519) in 16S rRNA + 4 S-adenosyl-L-methionine = N(6)-dimethyladenosine(1518)/N(6)-dimethyladenosine(1519) in 16S rRNA + 4 S-adenosyl-L-homocysteine + 4 H(+). Its function is as follows. Specifically dimethylates two adjacent adenosines (A1518 and A1519) in the loop of a conserved hairpin near the 3'-end of 16S rRNA in the 30S particle. May play a critical role in biogenesis of 30S subunits. The sequence is that of Ribosomal RNA small subunit methyltransferase A from Bartonella tribocorum (strain CIP 105476 / IBS 506).